The following is a 633-amino-acid chain: ATP-dependent clpX-like chaperone, mitochondrial (633 aa).

A mitochondrion-targeting transit peptide spans 1–56 (MPSCGACTCGAAAVRLITSSLASAQRGISGGRIHMSVLGRLGTFETQILQRAPLRS). The interval 68-100 (DGISKDGSGDGNKKSASEGSSKKSGSGNSGKGG) is disordered. Positions 69–83 (GISKDGSGDGNKKSA) are enriched in basic and acidic residues. Positions 84 to 93 (SEGSSKKSGS) are enriched in low complexity. The ClpX-type ZB domain maps to 93–146 (SGNSGKGGNQLRCPKCGDLCTHVETFVSSTRFVKCEKCHHFFVVLSEADSKKSI). Positions 105, 108, 127, and 130 each coordinate Zn(2+). An ATP-binding site is contributed by 294–301 (PTGSGKTL). K437 is modified (N6-acetyllysine). Basic and acidic residues predominate over residues 598–610 (KEPGYIRAPTKES). The disordered stretch occupies residues 598–633 (KEPGYIRAPTKESSEEEYDSGVEEEGWPRQADAANS). Over residues 611-622 (SEEEYDSGVEEE) the composition is skewed to acidic residues. The residue at position 617 (S617) is a Phosphoserine.

It belongs to the ClpX chaperone family. Homohexamer that forms a ring structure; this hexamerization requires ATP binding. Component of the ClpXP complex formed by the assembly of two CLPP heptameric rings with two CLPX hexameric rings, giving rise to a symmetrical structure with two central CLPP rings flanked by a CLPX ring at either end of the complex. Interacts with TFAM. Higher expression in skeletal muscle and heart and to a lesser extent in liver, brain, placenta, lung, kidney and pancreas.

Its subcellular location is the mitochondrion. The protein localises to the mitochondrion matrix. It localises to the mitochondrion nucleoid. The enzyme catalyses ATP + H2O = ADP + phosphate + H(+). ATP-dependent chaperone that functions as an unfoldase. As part of the ClpXP protease complex, it recognizes specific protein substrates, unfolds them using energy derived from ATP hydrolysis, and then translocates them to the proteolytic subunit (CLPP) of the ClpXP complex for degradation. Thanks to its chaperone activity, it also functions in the incorporation of the pyridoxal phosphate cofactor into 5-aminolevulinate synthase, thereby activating 5-aminolevulinate (ALA) synthesis, the first step in heme biosynthesis. This chaperone is also involved in the control of mtDNA nucleoid distribution, by regulating mitochondrial transcription factor A (TFAM) activity. This chain is ATP-dependent clpX-like chaperone, mitochondrial, found in Homo sapiens (Human).